The primary structure comprises 447 residues: MKDLISIIDVKDHVGETVKIGAWVADKSGKGKLQFLQLRDGTAFFQAVVFKPNMIENFGEEEGTAKFDEIKHLSQETSVYVTGVVKEDSRSKFGYELDVTDLEVIGQSHDYPITPKEHGVEFLLDNRHLWLRSKRQMAMMQVRNAIIYASYDFFAKNGFIKFDSPILSGNAAENTTELFETDYFGNSAFLSQSGQLYLEAGAMALGRVFDFGPVFRAEKSKTRRHLTEFWMMDAEYPFVTHDESLDIQEAYVKALIQGVLDNAAYALETLERDTSMLQKYIDTPFKRVSYDAAIDLLQAHENDEDTDYEHVEHGDDFGSPHETWISNYYGVPTFIVNYPASFKAFYMKPVPGNPERVLCADLLAPEGYGEIIGGSERETDYDLLLKKIADFGLDPKDYDWYLELRKFGSVPHAGFGLGLERMVTFVAGTEHIREAIPFPRMINRIQP.

This sequence belongs to the class-II aminoacyl-tRNA synthetase family. In terms of assembly, homodimer.

It localises to the cytoplasm. It catalyses the reaction tRNA(Asn) + L-asparagine + ATP = L-asparaginyl-tRNA(Asn) + AMP + diphosphate + H(+). This is Asparagine--tRNA ligase from Lactococcus lactis subsp. lactis (strain IL1403) (Streptococcus lactis).